The sequence spans 75 residues: Large ribosomal subunit protein bL31 (75 aa).

Belongs to the bacterial ribosomal protein bL31 family. Type A subfamily. As to quaternary structure, part of the 50S ribosomal subunit.

In terms of biological role, binds the 23S rRNA. The chain is Large ribosomal subunit protein bL31 from Chlorobium phaeovibrioides (strain DSM 265 / 1930) (Prosthecochloris vibrioformis (strain DSM 265)).